The chain runs to 59 residues: Sec-independent protein translocase protein TatA (59 aa).

The helical transmembrane segment at methionine 1 to phenylalanine 21 threads the bilayer.

It belongs to the TatA/E family. In terms of assembly, forms a complex with TatC.

The protein localises to the cell membrane. Functionally, part of the twin-arginine translocation (Tat) system that transports large folded proteins containing a characteristic twin-arginine motif in their signal peptide across membranes. TatA could form the protein-conducting channel of the Tat system. This chain is Sec-independent protein translocase protein TatA, found in Bacillus mycoides (strain KBAB4) (Bacillus weihenstephanensis).